A 402-amino-acid polypeptide reads, in one-letter code: Putative epoxide hydrolase AFT8 (402 aa).

It belongs to the peptidase S33 family.

It functions in the pathway mycotoxin biosynthesis. Its function is as follows. Putative epoxide hydrolase; part of the gene clusters that mediate the biosynthesis of the host-selective toxins (HSTs) AF-toxins responsible for Alternaria black spot of strawberry disease by the strawberry pathotype. AF-toxin I and III are valine derivatives of 2,3-dyhydroxy-isovaleric acid and 2-hydroxy-isovaleric acid respectively, while AF II is an isoleucine derivative of 2-hydroxy-valeric acid. These derivatives are bound to a 9,10-epoxy-8-hydroxy-9-methyl-decatrienoic acid (EDA) moiety. On cellular level, AF-toxins affect plasma membrane of susceptible cells and cause a sudden increase in loss of K(+) after a few minutes of toxin treatment. The aldo-keto reductase AFTS1 catalyzes the conversion of 2-keto-isovaleric acid (2-KIV) to 2-hydroxy-isovaleric acid (2-HIV) by reduction of its ketone to an alcohol. The acyl-CoA ligase AFT1, the hydrolase AFT2 and the enoyl-CoA hydratases AFT3 and AFT6, but also the polyketide synthase AFT9, the acyl-CoA dehydrogenase AFT10, the cytochrome P450 monooxygenase AFT11 and the oxidoreductase AFT12 are all involved in the biosynthesis of the AK-, AF- and ACT-toxin common EDA structural moiety. The exact function of each enzyme, and of additional enzymes identified within the AF-toxin clusters have still to be determined. The chain is Putative epoxide hydrolase AFT8 from Alternaria alternata (Alternaria rot fungus).